The primary structure comprises 316 residues: tRNA pseudouridine synthase B (316 aa).

Catalysis depends on D38, which acts as the Nucleophile. The 75-residue stretch at 238–312 (YPEVIVKSSA…PVCVLARQAG (75 aa)) folds into the PUA domain.

It belongs to the pseudouridine synthase TruB family. Type 1 subfamily.

The enzyme catalyses uridine(55) in tRNA = pseudouridine(55) in tRNA. Functionally, responsible for synthesis of pseudouridine from uracil-55 in the psi GC loop of transfer RNAs. The protein is tRNA pseudouridine synthase B of Pelotomaculum thermopropionicum (strain DSM 13744 / JCM 10971 / SI).